A 284-amino-acid chain; its full sequence is Release factor glutamine methyltransferase (284 aa).

Residues 123–127 (GTGTG), Asp146, Trp174, and Asn189 contribute to the S-adenosyl-L-methionine site. Residue 189-192 (NPPY) coordinates substrate.

This sequence belongs to the protein N5-glutamine methyltransferase family. PrmC subfamily.

It catalyses the reaction L-glutaminyl-[peptide chain release factor] + S-adenosyl-L-methionine = N(5)-methyl-L-glutaminyl-[peptide chain release factor] + S-adenosyl-L-homocysteine + H(+). Functionally, methylates the class 1 translation termination release factors RF1/PrfA and RF2/PrfB on the glutamine residue of the universally conserved GGQ motif. The sequence is that of Release factor glutamine methyltransferase from Francisella tularensis subsp. tularensis (strain SCHU S4 / Schu 4).